The following is a 516-amino-acid chain: GMP synthase [glutamine-hydrolyzing] (516 aa).

One can recognise a Glutamine amidotransferase type-1 domain in the interval 7–199; that stretch reads KIIILDFGSQ…VFGLCKCQAT (193 aa). Catalysis depends on cysteine 84, which acts as the Nucleophile. Active-site residues include histidine 173 and glutamate 175. The 192-residue stretch at 200–391 folds into the GMPS ATP-PPase domain; the sequence is WTMQGFIESN…LGLPDEAVHR (192 aa). 227–233 contacts ATP; it reads SGGVDSS.

Homodimer.

It catalyses the reaction XMP + L-glutamine + ATP + H2O = GMP + L-glutamate + AMP + diphosphate + 2 H(+). Its pathway is purine metabolism; GMP biosynthesis; GMP from XMP (L-Gln route): step 1/1. Catalyzes the synthesis of GMP from XMP. The sequence is that of GMP synthase [glutamine-hydrolyzing] from Desulfotalea psychrophila (strain LSv54 / DSM 12343).